The sequence spans 338 residues: Cell division protein ZipA (338 aa).

The Periplasmic segment spans residues 1-2 (MS). A helical transmembrane segment spans residues 3–23 (LREWLIAIGTLVIIGIVIDGV). Over 24-338 (RRMRRARKES…FERKQRSQRA (315 aa)) the chain is Cytoplasmic. Positions 33-192 (SMAISSGMGA…RKNQPLAGAN (160 aa)) are disordered. Basic and acidic residues-rich tracts occupy residues 70–81 (TLEDRGYLKRDM) and 138–162 (EVDRSKTRPSVPEKAKAEPEPRAEE).

This sequence belongs to the ZipA family. Interacts with FtsZ via their C-terminal domains.

The protein localises to the cell inner membrane. In terms of biological role, essential cell division protein that stabilizes the FtsZ protofilaments by cross-linking them and that serves as a cytoplasmic membrane anchor for the Z ring. Also required for the recruitment to the septal ring of downstream cell division proteins. The protein is Cell division protein ZipA of Marinobacter nauticus (strain ATCC 700491 / DSM 11845 / VT8) (Marinobacter aquaeolei).